Reading from the N-terminus, the 104-residue chain is Protein SMALL AUXIN UP-REGULATED RNA 12 (104 aa).

This sequence belongs to the ARG7 family. In terms of tissue distribution, expressed in flowers and etiolated hypocotyls.

The protein localises to the cell membrane. Its function is as follows. Provide a mechanistic link between auxin and plasma membrane H(+)-ATPases (PM H(+)-ATPases, e.g. AHA1 and AHA2), and triggers PM H(+)-ATPases activity by promoting phosphorylation of their C-terminal autoinhibitory domain as a result of PP2C-D subfamily of type 2C phosphatases inhibition, thus leading to the acidification of the apoplast and the facilitation of solutes and water uptake to drive cell expansion. Triggers plant growth probably by promoting cell elongation. Regulates branch angles and bending. The protein is Protein SMALL AUXIN UP-REGULATED RNA 12 of Arabidopsis thaliana (Mouse-ear cress).